A 302-amino-acid polypeptide reads, in one-letter code: UDP-N-acetylenolpyruvoylglucosamine reductase (302 aa).

Residues 29–192 form the FAD-binding PCMH-type domain; the sequence is KVGGPVDLLA…VAVTLQLSED (164 aa). Residue Arg172 is part of the active site. Ser221 (proton donor) is an active-site residue. The active site involves Glu291.

This sequence belongs to the MurB family. The cofactor is FAD.

Its subcellular location is the cytoplasm. It catalyses the reaction UDP-N-acetyl-alpha-D-muramate + NADP(+) = UDP-N-acetyl-3-O-(1-carboxyvinyl)-alpha-D-glucosamine + NADPH + H(+). Its pathway is cell wall biogenesis; peptidoglycan biosynthesis. Cell wall formation. In Trichlorobacter lovleyi (strain ATCC BAA-1151 / DSM 17278 / SZ) (Geobacter lovleyi), this protein is UDP-N-acetylenolpyruvoylglucosamine reductase.